An 809-amino-acid chain; its full sequence is DNA replication helicase (809 aa).

72–79 (GTAGAGKS) lines the ATP pocket.

The protein belongs to the herpesviridae helicase family. Associates with the primase and the primase-associated factor to form the helicase-primase complex.

Its subcellular location is the host nucleus. Functionally, component of the helicase/primase complex. Unwinds the DNA at the replication forks and generates single-stranded DNA for both leading and lagging strand synthesis. The primase synthesizes short RNA primers on the lagging strand that the polymerase elongates using dNTPs. Possesses helicase-like motifs and therefore may act as the helicase subunit of the complex. The chain is DNA replication helicase from Epstein-Barr virus (strain B95-8) (HHV-4).